The following is a 425-amino-acid chain: Serine--tRNA ligase (425 aa).

228–230 (TAE) lines the L-serine pocket. 259 to 261 (RSE) is a binding site for ATP. Residue Glu-282 coordinates L-serine. 346 to 349 (EIAS) is a binding site for ATP. L-serine is bound at residue Ser-382.

This sequence belongs to the class-II aminoacyl-tRNA synthetase family. Type-1 seryl-tRNA synthetase subfamily. Homodimer. The tRNA molecule binds across the dimer.

Its subcellular location is the cytoplasm. The enzyme catalyses tRNA(Ser) + L-serine + ATP = L-seryl-tRNA(Ser) + AMP + diphosphate + H(+). It carries out the reaction tRNA(Sec) + L-serine + ATP = L-seryl-tRNA(Sec) + AMP + diphosphate + H(+). Its pathway is aminoacyl-tRNA biosynthesis; selenocysteinyl-tRNA(Sec) biosynthesis; L-seryl-tRNA(Sec) from L-serine and tRNA(Sec): step 1/1. Catalyzes the attachment of serine to tRNA(Ser). Is also able to aminoacylate tRNA(Sec) with serine, to form the misacylated tRNA L-seryl-tRNA(Sec), which will be further converted into selenocysteinyl-tRNA(Sec). This chain is Serine--tRNA ligase, found in Rickettsia felis (strain ATCC VR-1525 / URRWXCal2) (Rickettsia azadi).